Consider the following 504-residue polypeptide: Chromosomal replication initiator protein DnaA (504 aa).

The domain I, interacts with DnaA modulators stretch occupies residues 1-109; that stretch reads MTADPDPPFV…PTDEPEDAPD (109 aa). The tract at residues 98–162 is disordered; sequence ATPTDEPEDA…PDTSSDDSNA (65 aa). Over residues 109-125 the composition is skewed to low complexity; that stretch reads DSFADSPAPASVPAGPA. The interval 110–163 is domain II; that stretch reads SFADSPAPASVPAGPADADEIDDDRDARVNAQESWPKYFSRPEPDTSSDDSNAV. Positions 164 to 380 are domain III, AAA+ region; that stretch reads NLNRRYTFDT…GALIRVTAFA (217 aa). Residues Gly-208, Gly-210, Lys-211, and Thr-212 each coordinate ATP. Residues 381-504 form a domain IV, binds dsDNA region; the sequence is SLNKTRIDRS…TTRIRQRAKR (124 aa).

This sequence belongs to the DnaA family. In terms of assembly, oligomerizes as a right-handed, spiral filament on DNA at oriC.

The protein resides in the cytoplasm. Plays an essential role in the initiation and regulation of chromosomal replication. ATP-DnaA binds to the origin of replication (oriC) to initiate formation of the DNA replication initiation complex once per cell cycle. Binds the DnaA box (a 9 base pair repeat at the origin) and separates the double-stranded (ds)DNA. Forms a right-handed helical filament on oriC DNA; dsDNA binds to the exterior of the filament while single-stranded (ss)DNA is stabiized in the filament's interior. The ATP-DnaA-oriC complex binds and stabilizes one strand of the AT-rich DNA unwinding element (DUE), permitting loading of DNA polymerase. After initiation quickly degrades to an ADP-DnaA complex that is not apt for DNA replication. Binds acidic phospholipids. Functionally, the probable consensus sequence for the DnaA box of this bacterium is 5'-TT(G/C)TCCACA-3'. The chain is Chromosomal replication initiator protein DnaA from Mycolicibacterium smegmatis (strain ATCC 700084 / mc(2)155) (Mycobacterium smegmatis).